Consider the following 211-residue polypeptide: Protein-L-isoaspartate O-methyltransferase (211 aa).

Ser-62 is a catalytic residue.

Belongs to the methyltransferase superfamily. L-isoaspartyl/D-aspartyl protein methyltransferase family.

The protein localises to the cytoplasm. It catalyses the reaction [protein]-L-isoaspartate + S-adenosyl-L-methionine = [protein]-L-isoaspartate alpha-methyl ester + S-adenosyl-L-homocysteine. In terms of biological role, catalyzes the methyl esterification of L-isoaspartyl residues in peptides and proteins that result from spontaneous decomposition of normal L-aspartyl and L-asparaginyl residues. It plays a role in the repair and/or degradation of damaged proteins. This is Protein-L-isoaspartate O-methyltransferase from Shewanella amazonensis (strain ATCC BAA-1098 / SB2B).